The sequence spans 70 residues: Conotoxin AbVIB (70 aa).

An N-terminal signal peptide occupies residues Val-1–Ala-17. Residues Glu-18 to Arg-41 constitute a propeptide that is removed on maturation. The disordered stretch occupies residues Ser-20–Arg-41. 3 disulfides stabilise this stretch: Cys-43-Cys-57, Cys-50-Cys-61, and Cys-56-Cys-68.

This sequence belongs to the conotoxin O1 superfamily. As to expression, expressed by the venom duct.

It localises to the secreted. The polypeptide is Conotoxin AbVIB (Conus abbreviatus (Abbreviated cone)).